We begin with the raw amino-acid sequence, 419 residues long: UDP-N-acetylglucosamine 1-carboxyvinyltransferase (419 aa).

A phosphoenolpyruvate-binding site is contributed by 22–23; it reads KN. Position 91 (arginine 91) interacts with UDP-N-acetyl-alpha-D-glucosamine. Cysteine 115 serves as the catalytic Proton donor. At cysteine 115 the chain carries 2-(S-cysteinyl)pyruvic acid O-phosphothioketal. UDP-N-acetyl-alpha-D-glucosamine contacts are provided by residues 120-124, 160-163, aspartate 305, and valine 327; these read RPVDL and KVSV.

Belongs to the EPSP synthase family. MurA subfamily.

Its subcellular location is the cytoplasm. It carries out the reaction phosphoenolpyruvate + UDP-N-acetyl-alpha-D-glucosamine = UDP-N-acetyl-3-O-(1-carboxyvinyl)-alpha-D-glucosamine + phosphate. Its pathway is cell wall biogenesis; peptidoglycan biosynthesis. Its function is as follows. Cell wall formation. Adds enolpyruvyl to UDP-N-acetylglucosamine. This chain is UDP-N-acetylglucosamine 1-carboxyvinyltransferase, found in Salmonella schwarzengrund (strain CVM19633).